Consider the following 919-residue polypeptide: DNA double-strand break repair Rad50 ATPase (919 aa).

ATP-binding positions include 33 to 39 (NGAGKST) and Gln143. 3 coiled-coil regions span residues 208-268 (MTLR…MLVN), 315-379 (HEVA…RRYT), and 414-458 (ESVL…LEES). In terms of domain architecture, Zinc-hook spans 417–516 (LERLDAVIND…EASRLQDKRR (100 aa)). Zn(2+) is bound by residues Cys464 and Cys467. Coiled coils occupy residues 486 to 515 (EAERLRKAAKEKAAEAEKARAEASRLQDKR), 541 to 595 (EDLA…LQRL), and 635 to 749 (AYRS…RKAS).

The protein belongs to the SMC family. RAD50 subfamily. Homodimer. Forms a heterotetramer composed of two Mre11 subunits and two Rad50 subunits. It depends on Zn(2+) as a cofactor.

Part of the Rad50/Mre11 complex, which is involved in the early steps of DNA double-strand break (DSB) repair. The complex may facilitate opening of the processed DNA ends to aid in the recruitment of HerA and NurA. Rad50 controls the balance between DNA end bridging and DNA resection via ATP-dependent structural rearrangements of the Rad50/Mre11 complex. This Aeropyrum pernix (strain ATCC 700893 / DSM 11879 / JCM 9820 / NBRC 100138 / K1) protein is DNA double-strand break repair Rad50 ATPase.